The chain runs to 196 residues: Chloroplastic ATP-dependent Clp protease proteolytic subunit 1 (196 aa).

S101 serves as the catalytic Nucleophile. H126 is an active-site residue.

It belongs to the peptidase S14 family. In terms of assembly, component of the chloroplastic Clp protease core complex which consist of at least 16 proteins: CLPP4 (3 copies), CLPP5 (3 copies), CLPR4 (2 copies), ClpP1 (1 copy), CLPP6 (1 copy), CLPR2 (1 copy), CLPT1 (1 copy), CLPT2 (1 copy) and 3 copies of CLPP3 and/or CLPR1 and/or CLPR3. The core complex is organized in two heptameric rings, one containing CLPP3,4,5,6 in a 1:2:3:1 ratio and the other CLPP1 and CLPR1,2,3,4 in a 3:1:1:1:1 ratio. As to expression, mostly expressed in leaves. Also detected in stems, and to a lower extent, in roots (at protein level).

It is found in the plastid. Its subcellular location is the chloroplast stroma. It carries out the reaction Hydrolysis of proteins to small peptides in the presence of ATP and magnesium. alpha-casein is the usual test substrate. In the absence of ATP, only oligopeptides shorter than five residues are hydrolyzed (such as succinyl-Leu-Tyr-|-NHMec, and Leu-Tyr-Leu-|-Tyr-Trp, in which cleavage of the -Tyr-|-Leu- and -Tyr-|-Trp bonds also occurs).. Its function is as follows. Cleaves peptides in various proteins in a process that requires ATP hydrolysis. Has a chymotrypsin-like activity. Plays a major role in the degradation of misfolded proteins. The protein is Chloroplastic ATP-dependent Clp protease proteolytic subunit 1 of Arabidopsis thaliana (Mouse-ear cress).